The following is a 441-amino-acid chain: Ribulose bisphosphate carboxylase large chain (441 aa).

Lysine 5 carries the post-translational modification N6,N6,N6-trimethyllysine. Asparagine 114 and threonine 164 together coordinate substrate. Lysine 166 acts as the Proton acceptor in catalysis. Lysine 168 is a binding site for substrate. 3 residues coordinate Mg(2+): lysine 192, aspartate 194, and glutamate 195. At lysine 192 the chain carries N6-carboxylysine. Histidine 285 (proton acceptor) is an active-site residue. Residues arginine 286, histidine 318, and serine 370 each contribute to the substrate site.

Belongs to the RuBisCO large chain family. Type I subfamily. As to quaternary structure, heterohexadecamer of 8 large chains and 8 small chains; disulfide-linked. The disulfide link is formed within the large subunit homodimers. It depends on Mg(2+) as a cofactor. The disulfide bond which can form in the large chain dimeric partners within the hexadecamer appears to be associated with oxidative stress and protein turnover.

Its subcellular location is the plastid. It is found in the chloroplast. It carries out the reaction 2 (2R)-3-phosphoglycerate + 2 H(+) = D-ribulose 1,5-bisphosphate + CO2 + H2O. It catalyses the reaction D-ribulose 1,5-bisphosphate + O2 = 2-phosphoglycolate + (2R)-3-phosphoglycerate + 2 H(+). RuBisCO catalyzes two reactions: the carboxylation of D-ribulose 1,5-bisphosphate, the primary event in carbon dioxide fixation, as well as the oxidative fragmentation of the pentose substrate in the photorespiration process. Both reactions occur simultaneously and in competition at the same active site. The protein is Ribulose bisphosphate carboxylase large chain of Drosera dichrosepala (Rusty sundew).